We begin with the raw amino-acid sequence, 244 residues long: Serine-rich single-pass membrane protein 1 (244 aa).

Residues Cys35–Phe55 form a helical membrane-spanning segment. Disordered regions lie at residues Asp65–Asn114, Gln126–Tyr191, and Leu210–Phe244. Residues Ala80 to Ala94 are compositionally biased toward basic and acidic residues. Composition is skewed to polar residues over residues Asp96 to Asn114 and Gln132 to Gln142. Residues Ser161 to Ile176 show a composition bias toward basic and acidic residues.

Its subcellular location is the membrane. The protein is Serine-rich single-pass membrane protein 1 (SSMEM1) of Homo sapiens (Human).